Consider the following 232-residue polypeptide: MIFNVLTIFPQMFPGPLGVSNLGSALKKGLWTLNVFDIRAFANNKHNTVDDTPYGGGPGMLLRADVLGRCIDEVLSLHPNTKLMFTSPRGVSFTQDIARQTMNFDNITLLCGRFEGIDERVVDFYKLQEVSIGDYVLSGGELAAMVIIDTCVRMVPGVIGNAESLKQESMEGSLEYPQYTRPASWKGMEVPEVLLTGNHGEIEKWRRNASLSITAARRPDLLKDRYGENDVE.

Residues Gly-112 and 132–137 (IGDYVL) each bind S-adenosyl-L-methionine.

Belongs to the RNA methyltransferase TrmD family. In terms of assembly, homodimer.

The protein localises to the cytoplasm. The enzyme catalyses guanosine(37) in tRNA + S-adenosyl-L-methionine = N(1)-methylguanosine(37) in tRNA + S-adenosyl-L-homocysteine + H(+). Specifically methylates guanosine-37 in various tRNAs. The polypeptide is tRNA (guanine-N(1)-)-methyltransferase (Anaplasma phagocytophilum (strain HZ)).